A 405-amino-acid chain; its full sequence is Argininosuccinate synthase (405 aa).

Residues Ala10 to Ser18 and Ala37 each bind ATP. Positions 88 and 93 each coordinate L-citrulline. Gly118 lines the ATP pocket. Positions 120, 124, and 125 each coordinate L-aspartate. Asn124 is an L-citrulline binding site. The L-citrulline site is built by Arg128, Ser179, Ser188, Glu264, and Tyr276.

It belongs to the argininosuccinate synthase family. Type 1 subfamily. In terms of assembly, homotetramer.

The protein localises to the cytoplasm. It catalyses the reaction L-citrulline + L-aspartate + ATP = 2-(N(omega)-L-arginino)succinate + AMP + diphosphate + H(+). Its pathway is amino-acid biosynthesis; L-arginine biosynthesis; L-arginine from L-ornithine and carbamoyl phosphate: step 2/3. The protein is Argininosuccinate synthase of Pseudomonas syringae pv. tomato (strain ATCC BAA-871 / DC3000).